A 743-amino-acid chain; its full sequence is Protein will decrease acetylation (743 aa).

6 WD repeats span residues E389 to K428, L493 to W524, Y535 to I576, Y577 to V618, F619 to E660, and L661 to D702.

It belongs to the WD repeat TAF5 family. Component of the Spt-Ada-Gcn5 acetyltransferase (SAGA) complex consisting of wda/Taf5L, Saf6, Taf9, Taf10b, Taf12, Ada1, Spt3, Spt7, Spt20, Sf3b3, Sf3b5, Nipped-A/Tra1, a histone acetyltransferase (HAT) module made up of Gcn5, Ada2b (Isoform B), Ada3 and Sgf29, and a deubiquitinase (DUB) module made up of not/nonstop, Sgf11 and e(y)2 tethered to SAGA by Atxn7. Not essential for the assembly or integrity of the SAGA complex. Not a component of the Ada2a-containing ATAC complex.

It is found in the nucleus. The protein localises to the chromosome. Component of the transcription regulatory complex SAGA, a multiprotein complex that activates transcription by remodeling chromatin and mediating histone acetylation and deubiquitination. The SAGA complex predominantly acetylates histone H3. Involved in acetylation of histone H3 on 'Lys-10' (H3K9ac) by the SAGA complex in the larval central nervous system. Involved in SAGA complex coactivator functions. Required for oogenesis. This chain is Protein will decrease acetylation, found in Drosophila melanogaster (Fruit fly).